A 205-amino-acid chain; its full sequence is MIGRLRGVLIEKQAPEVLIDVNGVGYELQMPLTSFYELPEVNQPTTVYTHFVVREDAQLLYGFITKKERSLFRLLIKANGVGPKLALTILSGMTASEFVGCVERDDIVTLVKLPGVGKKTAERLLVEMRDKLKSLMEASVGSEREFVLQSNYSPAPTVNSAEEDAISALLSLGYKPPQASKAVSAAYKEGMDSETLIKAALKSML.

A domain I region spans residues 1-64 (MIGRLRGVLI…EDAQLLYGFI (64 aa)). Residues 65–143 (TKKERSLFRL…SLMEASVGSE (79 aa)) are domain II. Positions 144–156 (REFVLQSNYSPAP) are flexible linker. Residues 157–205 (TVNSAEEDAISALLSLGYKPPQASKAVSAAYKEGMDSETLIKAALKSML) form a domain III region.

This sequence belongs to the RuvA family. As to quaternary structure, homotetramer. Forms an RuvA(8)-RuvB(12)-Holliday junction (HJ) complex. HJ DNA is sandwiched between 2 RuvA tetramers; dsDNA enters through RuvA and exits via RuvB. An RuvB hexamer assembles on each DNA strand where it exits the tetramer. Each RuvB hexamer is contacted by two RuvA subunits (via domain III) on 2 adjacent RuvB subunits; this complex drives branch migration. In the full resolvosome a probable DNA-RuvA(4)-RuvB(12)-RuvC(2) complex forms which resolves the HJ.

It is found in the cytoplasm. The RuvA-RuvB-RuvC complex processes Holliday junction (HJ) DNA during genetic recombination and DNA repair, while the RuvA-RuvB complex plays an important role in the rescue of blocked DNA replication forks via replication fork reversal (RFR). RuvA specifically binds to HJ cruciform DNA, conferring on it an open structure. The RuvB hexamer acts as an ATP-dependent pump, pulling dsDNA into and through the RuvAB complex. HJ branch migration allows RuvC to scan DNA until it finds its consensus sequence, where it cleaves and resolves the cruciform DNA. The chain is Holliday junction branch migration complex subunit RuvA from Shewanella sp. (strain MR-4).